Consider the following 610-residue polypeptide: DNA mismatch repair protein MutL (610 aa).

Belongs to the DNA mismatch repair MutL/HexB family.

Functionally, this protein is involved in the repair of mismatches in DNA. It is required for dam-dependent methyl-directed DNA mismatch repair. May act as a 'molecular matchmaker', a protein that promotes the formation of a stable complex between two or more DNA-binding proteins in an ATP-dependent manner without itself being part of a final effector complex. This Rickettsia peacockii (strain Rustic) protein is DNA mismatch repair protein MutL.